A 662-amino-acid polypeptide reads, in one-letter code: Probable protein phosphatase 2C 4 (662 aa).

The residue at position 153 (Ser153) is a Phosphoserine. Positions 249–653 constitute a PPM-type phosphatase domain; sequence DVSLENQNLQ…DDVSIVVISL (405 aa). Mn(2+)-binding residues include Asp286, Gly287, Asp581, and Asp644.

It belongs to the PP2C family. Mg(2+) serves as cofactor. It depends on Mn(2+) as a cofactor. As to expression, expressed in seedlings, roots, leaves, stems, young inflorescences, flowers and siliques.

It is found in the nucleus. It carries out the reaction O-phospho-L-seryl-[protein] + H2O = L-seryl-[protein] + phosphate. It catalyses the reaction O-phospho-L-threonyl-[protein] + H2O = L-threonyl-[protein] + phosphate. Functionally, involved in leaf development regulation. The sequence is that of Probable protein phosphatase 2C 4 (PLL5) from Arabidopsis thaliana (Mouse-ear cress).